The following is a 466-amino-acid chain: Citrate synthase, mitochondrial (466 aa).

The N-terminal 27 residues, 1–27 (MALLTAAARLLGTKNASCLVLAARHAS), are a transit peptide targeting the mitochondrion. An SIFI-degron motif is present at residues 2 to 21 (ALLTAAARLLGTKNASCLVL). An N6-succinyllysine modification is found at lysine 57. Lysine 76 bears the N6-acetyllysine; alternate mark. Lysine 76 is modified (N6-succinyllysine; alternate). N6-succinyllysine occurs at positions 103 and 193. Histidine 301 is a catalytic residue. Residues lysine 321 and lysine 327 each carry the N6-acetyllysine; alternate modification. N6-succinyllysine; alternate is present on residues lysine 321 and lysine 327. Histidine 347 is a catalytic residue. Residue arginine 356 coordinates oxaloacetate. An N6-acetyllysine; alternate modification is found at lysine 375. Lysine 375 is modified (N6-succinyllysine; alternate). Lysine 382 is modified (N6-acetyllysine). An N6-acetyllysine; alternate modification is found at lysine 393. Lysine 393 carries the post-translational modification N6-succinyllysine; alternate. At lysine 395 the chain carries N6,N6,N6-trimethyllysine. Aspartate 402 is a catalytic residue. Positions 428 and 448 each coordinate oxaloacetate. An N6-succinyllysine modification is found at lysine 450. N6-acetyllysine; alternate is present on lysine 459. Lysine 459 carries the N6-succinyllysine; alternate modification.

This sequence belongs to the citrate synthase family. Homodimer. Post-translationally, methylated. Trimethylation at Lys-395 by CSKMT decreases citrate synthase activity. In response to mitochondrial stress, the precursor protein is ubiquitinated by the SIFI complex in the cytoplasm before mitochondrial import, leading to its degradation. Within the SIFI complex, UBR4 initiates ubiquitin chain that are further elongated or branched by KCMF1.

Its subcellular location is the mitochondrion matrix. It catalyses the reaction oxaloacetate + acetyl-CoA + H2O = citrate + CoA + H(+). The protein operates within carbohydrate metabolism; tricarboxylic acid cycle; isocitrate from oxaloacetate: step 1/2. Key enzyme of the Krebs tricarboxylic acid cycle which catalyzes the synthesis of citrate from acetyl coenzyme A and oxaloacetate. The polypeptide is Citrate synthase, mitochondrial (CS) (Macaca fascicularis (Crab-eating macaque)).